The following is a 388-amino-acid chain: Probable peptidoglycan glycosyltransferase FtsW (388 aa).

The next 11 helical transmembrane spans lie at 16 to 36, 54 to 74, 82 to 102, 109 to 129, 144 to 164, 167 to 187, 189 to 209, 233 to 253, 277 to 297, 310 to 330, and 342 to 362; these read LVLI…SSSV, VFAL…PSQS, WFLL…EIGG, LVVM…LFLA, TAVI…LLQP, GTTV…GAPF, YFVI…INSP, SQAL…GASV, WLGV…MFAV, ALVV…NVGV, and LPFV…IGLV.

Belongs to the SEDS family. FtsW subfamily.

Its subcellular location is the cell inner membrane. The enzyme catalyses [GlcNAc-(1-&gt;4)-Mur2Ac(oyl-L-Ala-gamma-D-Glu-L-Lys-D-Ala-D-Ala)](n)-di-trans,octa-cis-undecaprenyl diphosphate + beta-D-GlcNAc-(1-&gt;4)-Mur2Ac(oyl-L-Ala-gamma-D-Glu-L-Lys-D-Ala-D-Ala)-di-trans,octa-cis-undecaprenyl diphosphate = [GlcNAc-(1-&gt;4)-Mur2Ac(oyl-L-Ala-gamma-D-Glu-L-Lys-D-Ala-D-Ala)](n+1)-di-trans,octa-cis-undecaprenyl diphosphate + di-trans,octa-cis-undecaprenyl diphosphate + H(+). It participates in cell wall biogenesis; peptidoglycan biosynthesis. In terms of biological role, peptidoglycan polymerase that is essential for cell division. The polypeptide is Probable peptidoglycan glycosyltransferase FtsW (Thiomicrospira cyclica (strain DSM 14477 / JCM 11371 / ALM1) (Thioalkalimicrobium cyclicum)).